The chain runs to 321 residues: ATP-dependent 6-phosphofructokinase (321 aa).

Residue Gly-12 coordinates ATP. Residues Arg-22–Arg-26 and Arg-55–Asp-60 each bind ADP. Residues Arg-73–Phe-74 and Gly-103–Ser-106 contribute to the ATP site. Asp-104 contacts Mg(2+). Thr-127–Asp-129 contributes to the substrate binding site. Asp-129 (proton acceptor) is an active-site residue. Arg-156 provides a ligand contact to ADP. Substrate-binding positions include Arg-164 and Met-171 to Arg-173. Residues Gly-187 to Glu-189, Arg-213, and Lys-215 to His-217 each bind ADP. Substrate-binding positions include Glu-224, Arg-245, and His-251–Arg-254.

It belongs to the phosphofructokinase type A (PFKA) family. ATP-dependent PFK group I subfamily. Prokaryotic clade 'B1' sub-subfamily. Homotetramer. Mg(2+) is required as a cofactor.

It is found in the cytoplasm. It carries out the reaction beta-D-fructose 6-phosphate + ATP = beta-D-fructose 1,6-bisphosphate + ADP + H(+). It functions in the pathway carbohydrate degradation; glycolysis; D-glyceraldehyde 3-phosphate and glycerone phosphate from D-glucose: step 3/4. Its activity is regulated as follows. Allosterically activated by ADP and other diphosphonucleosides, and allosterically inhibited by phosphoenolpyruvate. Its function is as follows. Catalyzes the phosphorylation of D-fructose 6-phosphate to fructose 1,6-bisphosphate by ATP, the first committing step of glycolysis. The chain is ATP-dependent 6-phosphofructokinase from Haemophilus influenzae (strain 86-028NP).